Here is a 435-residue protein sequence, read N- to C-terminus: Methylenetetrahydrofolate--tRNA-(uracil-5-)-methyltransferase TrmFO (435 aa).

7–12 (GAGLAG) lines the FAD pocket.

It belongs to the MnmG family. TrmFO subfamily. The cofactor is FAD.

The protein resides in the cytoplasm. It carries out the reaction uridine(54) in tRNA + (6R)-5,10-methylene-5,6,7,8-tetrahydrofolate + NADH + H(+) = 5-methyluridine(54) in tRNA + (6S)-5,6,7,8-tetrahydrofolate + NAD(+). The catalysed reaction is uridine(54) in tRNA + (6R)-5,10-methylene-5,6,7,8-tetrahydrofolate + NADPH + H(+) = 5-methyluridine(54) in tRNA + (6S)-5,6,7,8-tetrahydrofolate + NADP(+). Functionally, catalyzes the folate-dependent formation of 5-methyl-uridine at position 54 (M-5-U54) in all tRNAs. The sequence is that of Methylenetetrahydrofolate--tRNA-(uracil-5-)-methyltransferase TrmFO from Thermotoga sp. (strain RQ2).